The following is a 330-amino-acid chain: D-lactate dehydrogenase (330 aa).

NAD(+)-binding positions include 156–157 (RI), Asp-176, 206–207 (VP), 233–235 (AAR), and Asp-259. The active site involves Arg-235. Glu-264 is a catalytic residue. The active-site Proton donor is His-296.

This sequence belongs to the D-isomer specific 2-hydroxyacid dehydrogenase family.

It catalyses the reaction (R)-lactate + NAD(+) = pyruvate + NADH + H(+). The sequence is that of D-lactate dehydrogenase (ldhD) from Staphylococcus epidermidis (strain ATCC 35984 / DSM 28319 / BCRC 17069 / CCUG 31568 / BM 3577 / RP62A).